Here is a 377-residue protein sequence, read N- to C-terminus: Secreted LysM effector Lys2 (377 aa).

Positions 1–22 are cleaved as a signal peptide; that stretch reads MVRQSIGLIALQLLNLVSVAQA. The segment covering 104–119 has biased composition (low complexity); it reads TSSSTATTTSQKPTAT. A disordered region spans residues 104 to 124; sequence TSSSTATTTSQKPTATVSPLP. LysM domains follow at residues 135–182 and 207–253; these read KYYN…YVCV and KYYK…YYCV.

This sequence belongs to the secreted LysM effector family.

Functionally, might have a role in sequestration of chitin oligosaccharides (breakdown products of fungal cell walls that are released during invasion and act as triggers of host immunity) to dampen host defense. The chain is Secreted LysM effector Lys2 from Pochonia chlamydosporia (strain 123) (Metacordyceps chlamydosporia).